A 155-amino-acid polypeptide reads, in one-letter code: Large-conductance mechanosensitive channel (155 aa).

3 helical membrane-spanning segments follow: residues 16–36 (VVDM…VNNL), 40–60 (VILP…LYII), and 88–108 (GVFL…FLLV).

Belongs to the MscL family. As to quaternary structure, homopentamer.

The protein localises to the cell inner membrane. Its function is as follows. Channel that opens in response to stretch forces in the membrane lipid bilayer. May participate in the regulation of osmotic pressure changes within the cell. The protein is Large-conductance mechanosensitive channel of Chlorobium chlorochromatii (strain CaD3).